Reading from the N-terminus, the 190-residue chain is NADH dehydrogenase [ubiquinone] iron-sulfur protein 3 (190 aa).

Belongs to the complex I 30 kDa subunit family. In terms of assembly, complex I is composed of about 45 different subunits. This is a component of the iron-sulfur (IP) fragment of the enzyme.

It is found in the mitochondrion inner membrane. The enzyme catalyses a ubiquinone + NADH + 5 H(+)(in) = a ubiquinol + NAD(+) + 4 H(+)(out). Its function is as follows. Core subunit of the mitochondrial membrane respiratory chain NADH dehydrogenase (Complex I) that is believed to belong to the minimal assembly required for catalysis. Complex I functions in the transfer of electrons from NADH to the respiratory chain. The immediate electron acceptor for the enzyme is believed to be ubiquinone. This chain is NADH dehydrogenase [ubiquinone] iron-sulfur protein 3 (NAD9), found in Oryza sativa subsp. japonica (Rice).